The sequence spans 198 residues: NADH-quinone oxidoreductase subunit C (198 aa).

It belongs to the complex I 30 kDa subunit family. NDH-1 is composed of 14 different subunits. Subunits NuoB, C, D, E, F, and G constitute the peripheral sector of the complex.

It is found in the cell inner membrane. The enzyme catalyses a quinone + NADH + 5 H(+)(in) = a quinol + NAD(+) + 4 H(+)(out). Its function is as follows. NDH-1 shuttles electrons from NADH, via FMN and iron-sulfur (Fe-S) centers, to quinones in the respiratory chain. The immediate electron acceptor for the enzyme in this species is believed to be ubiquinone. Couples the redox reaction to proton translocation (for every two electrons transferred, four hydrogen ions are translocated across the cytoplasmic membrane), and thus conserves the redox energy in a proton gradient. This is NADH-quinone oxidoreductase subunit C from Chromobacterium violaceum (strain ATCC 12472 / DSM 30191 / JCM 1249 / CCUG 213 / NBRC 12614 / NCIMB 9131 / NCTC 9757 / MK).